A 254-amino-acid polypeptide reads, in one-letter code: Small ribosomal subunit protein uS2 (254 aa).

Positions 228-254 are disordered; sequence DRGAEKEVEAAEEAPAAEAEAAPATEE. Low complexity predominate over residues 240-254; sequence EAPAAEAEAAPATEE.

Belongs to the universal ribosomal protein uS2 family.

The protein is Small ribosomal subunit protein uS2 of Flavobacterium johnsoniae (strain ATCC 17061 / DSM 2064 / JCM 8514 / BCRC 14874 / CCUG 350202 / NBRC 14942 / NCIMB 11054 / UW101) (Cytophaga johnsonae).